The chain runs to 88 residues: YcgL domain-containing protein NTHI1684 (88 aa).

Residues 1-85 (MLCAIYKSKK…QDDGLFNSLS (85 aa)) form the YcgL domain.

In Haemophilus influenzae (strain 86-028NP), this protein is YcgL domain-containing protein NTHI1684.